Reading from the N-terminus, the 431-residue chain is Isochorismate synthase MenF (431 aa).

The active-site Proton acceptor is K183. Catalysis depends on E233, which acts as the Proton donor. 2 residues coordinate Mg(2+): E277 and E414.

This sequence belongs to the isochorismate synthase family. It depends on Mg(2+) as a cofactor.

The catalysed reaction is chorismate = isochorismate. The protein operates within quinol/quinone metabolism; 1,4-dihydroxy-2-naphthoate biosynthesis; 1,4-dihydroxy-2-naphthoate from chorismate: step 1/7. Its pathway is quinol/quinone metabolism; menaquinone biosynthesis. In terms of biological role, catalyzes the conversion of chorismate to isochorismate. The sequence is that of Isochorismate synthase MenF from Pasteurella multocida (strain Pm70).